Here is a 301-residue protein sequence, read N- to C-terminus: MALVVICGQPCSGKSAAAACLAAALCSSTSDLTVRIIDESSLHLGRNDSYKDMVVEKNLRGVLRSEVDRSVSRDSIIVVDSLNNIKGYRYELWCLARASGIRYCVLFCDTEVDHCREWNTKRQEKGEPTYDNNIFDDLVSRFEKPDRRNRWDSPLFELFPSRDGVMESSPVIAEAVSYLTKKVDSKTRDVKVLQPTIATQTARTTEANSLYEMDKATQEVINAIVEAQSCGLGLPVNKISLGPDLPTICLQRSVGLPELRSLRRTFIKLAGQYSLSGPPPPADADSATRMFVDYLNREISS.

Residue 8–15 (GQPCSGKS) coordinates ATP. The tract at residues 262–275 (LRRTFIKLAGQYSL) is calmodulin-binding.

Belongs to the KTI12 family. Interacts with the elongator complex. Binds to calmodulin in a calcium-dependent manner.

The protein localises to the cytoplasm. It is found in the nucleus. In terms of biological role, elongator complex-associated factor that is not a structural subunit but rather transiently contacts the complex. Regulates both meristem activity and organ growth; acts as a positive regulator of adaxial leaf patterning. Required for an early step in synthesis of 5-carbamoylmethyl (ncm5) groups present on uridines (ncm5U) at the wobble position in tRNA. This Oryza sativa subsp. indica (Rice) protein is Protein KTI12 homolog.